The primary structure comprises 81 residues: Acyl carrier protein (81 aa).

A Carrier domain is found at 2–80 (ASNEEILAGL…DAVSYIASAQ (79 aa)). An O-(pantetheine 4'-phosphoryl)serine modification is found at S40.

It belongs to the acyl carrier protein (ACP) family. In terms of processing, 4'-phosphopantetheine is transferred from CoA to a specific serine of apo-ACP by AcpS. This modification is essential for activity because fatty acids are bound in thioester linkage to the sulfhydryl of the prosthetic group.

It is found in the cytoplasm. It participates in lipid metabolism; fatty acid biosynthesis. Its function is as follows. Carrier of the growing fatty acid chain in fatty acid biosynthesis. This is Acyl carrier protein from Renibacterium salmoninarum (strain ATCC 33209 / DSM 20767 / JCM 11484 / NBRC 15589 / NCIMB 2235).